We begin with the raw amino-acid sequence, 505 residues long: 2-isopropylmalate synthase (505 aa).

The Pyruvate carboxyltransferase domain maps to I5–Y269. Positions 14, 204, 206, and 240 each coordinate Mn(2+). The interval S393–R505 is regulatory domain.

It belongs to the alpha-IPM synthase/homocitrate synthase family. LeuA type 1 subfamily. Homodimer. The cofactor is Mn(2+).

It localises to the cytoplasm. It catalyses the reaction 3-methyl-2-oxobutanoate + acetyl-CoA + H2O = (2S)-2-isopropylmalate + CoA + H(+). It participates in amino-acid biosynthesis; L-leucine biosynthesis; L-leucine from 3-methyl-2-oxobutanoate: step 1/4. Its function is as follows. Catalyzes the condensation of the acetyl group of acetyl-CoA with 3-methyl-2-oxobutanoate (2-ketoisovalerate) to form 3-carboxy-3-hydroxy-4-methylpentanoate (2-isopropylmalate). This Sediminispirochaeta smaragdinae (strain DSM 11293 / JCM 15392 / SEBR 4228) (Spirochaeta smaragdinae) protein is 2-isopropylmalate synthase.